The primary structure comprises 161 residues: Dehydrin DHN3 (161 aa).

Residues 1-12 (MEHGHATNRVDE) are compositionally biased toward basic and acidic residues. The segment at 1 to 161 (MEHGHATNRV…KIKEKLPGQH (161 aa)) is disordered. The segment covering 20–38 (HGVGTGMGAHGGVGTGAAA) has biased composition (gly residues). Composition is skewed to low complexity over residues 93–107 (DQQQ…HGHT) and 115–130 (HGAT…QGHT). A run of 2 repeats spans residues 101–123 (YGQH…TGGT) and 124–144 (YGQQ…DGTG). The segment at 101-144 (YGQHGHTGMTGTGEHGATATGGTYGQQGHTGMTGTGAHGTDGTG) is 2 X approximate tandem repeats. Residues 131 to 142 (GMTGTGAHGTDG) show a composition bias toward gly residues. The span at 143–161 (TGEKKGIMDKIKEKLPGQH) shows a compositional bias: basic and acidic residues.

The protein belongs to the plant dehydrin family.

The sequence is that of Dehydrin DHN3 (DHN3) from Hordeum vulgare (Barley).